A 682-amino-acid chain; its full sequence is Probable potassium transport system protein Kup (682 aa).

The next 12 helical transmembrane spans lie at 13-33, 55-75, 98-118, 138-158, 171-191, 217-237, 250-270, 295-315, 344-364, 375-395, 405-425, and 428-448; these read GLLV…LYVM, ISLI…LIAL, WLVI…TLTP, IPVP…LFLF, TFGP…IMNL, VGVL…ALYS, SWPY…VWIL, FFAI…LITG, LFIP…VFLF, GLAI…YLSL, VFLL…LAKF, and GGYV…IWYF.

This sequence belongs to the HAK/KUP transporter (TC 2.A.72) family.

Its subcellular location is the cell membrane. It catalyses the reaction K(+)(in) + H(+)(in) = K(+)(out) + H(+)(out). Functionally, transport of potassium into the cell. Likely operates as a K(+):H(+) symporter. In Lactobacillus gasseri (strain ATCC 33323 / DSM 20243 / BCRC 14619 / CIP 102991 / JCM 1131 / KCTC 3163 / NCIMB 11718 / NCTC 13722 / AM63), this protein is Probable potassium transport system protein Kup.